The following is a 595-amino-acid chain: Merlin (595 aa).

Serine 13 carries the phosphoserine modification. In terms of domain architecture, FERM spans 22-311 (FTVRIVTMDA…GNHDLFMRRR (290 aa)). Residue serine 518 is modified to Phosphoserine; by PAK.

As to quaternary structure, interacts with NHERF1, HGS and AGAP2. Interacts with SGSM3. Interacts (via FERM domain) with MPP1. Interacts with LAYN and WWC1. Interacts with the CUL4A-RBX1-DDB1-VprBP/DCAF1 E3 ubiquitin-protein ligase complex. The unphosphorylated form interacts (via FERM domain) with VPRBP/DCAF1. Interacts (via FERM domain) with NOP53; the interaction is direct. Interacts with SCHIP1; the interaction is direct. Phosphorylation of Ser-518 inhibits nuclear localization by disrupting the intramolecular association of the FERM domain with the C-terminal tail. Post-translationally, ubiquitinated by the CUL4A-RBX1-DDB1-DCAF1/VprBP E3 ubiquitin-protein ligase complex for ubiquitination and subsequent proteasome-dependent degradation. In terms of processing, phosphorylation of Ser-518 inhibits nuclear localization by disrupting the intramolecular association of the FERM domain with the C-terminal tail. The dephosphorylation of Ser-518 favors the interaction with NOP53.

It localises to the cell membrane. The protein localises to the cell projection. It is found in the cytoplasm. Its subcellular location is the cytoskeleton. The protein resides in the nucleus. Its function is as follows. Probable regulator of the Hippo/SWH (Sav/Wts/Hpo) signaling pathway, a signaling pathway that plays a pivotal role in tumor suppression by restricting proliferation and promoting apoptosis. Along with WWC1 can synergistically induce the phosphorylation of LATS1 and LATS2 and can probably function in the regulation of the Hippo/SWH (Sav/Wts/Hpo) signaling pathway. May act as a membrane stabilizing protein. May inhibit PI3 kinase by binding to AGAP2 and impairing its stimulating activity. Suppresses cell proliferation and tumorigenesis by inhibiting the CUL4A-RBX1-DDB1-VprBP/DCAF1 E3 ubiquitin-protein ligase complex. The polypeptide is Merlin (NF2) (Papio anubis (Olive baboon)).